The primary structure comprises 235 residues: tRNA (guanine-N(1)-)-methyltransferase (235 aa).

S-adenosyl-L-methionine is bound by residues Gly112 and 132-137 (LGDFVL).

The protein belongs to the RNA methyltransferase TrmD family. In terms of assembly, homodimer.

It is found in the cytoplasm. It catalyses the reaction guanosine(37) in tRNA + S-adenosyl-L-methionine = N(1)-methylguanosine(37) in tRNA + S-adenosyl-L-homocysteine + H(+). Its function is as follows. Specifically methylates guanosine-37 in various tRNAs. The sequence is that of tRNA (guanine-N(1)-)-methyltransferase from Acaryochloris marina (strain MBIC 11017).